We begin with the raw amino-acid sequence, 141 residues long: Hemoglobin subunit alpha-3 (141 aa).

One can recognise a Globin domain in the interval 1 to 141 (VLSPADKTNV…VSTVLTSKYR (141 aa)). His58 contacts O2. His87 is a heme b binding site.

The protein belongs to the globin family. As to quaternary structure, heterotetramer of two alpha chains and two beta chains. Red blood cells.

In terms of biological role, involved in oxygen transport from the lung to the various peripheral tissues. In Gorilla gorilla gorilla (Western lowland gorilla), this protein is Hemoglobin subunit alpha-3.